A 300-amino-acid chain; its full sequence is HTH-type transcriptional activator NahR (300 aa).

Residues 6 to 63 form the HTH lysR-type domain; that stretch reads LDLNLLVVFNQLLVDRRVSITAENLGLTQPAVSNALKRLRTSLQDPLFVRTHQGMEPT. The H-T-H motif DNA-binding region spans 23–42; it reads VSITAENLGLTQPAVSNALK.

This sequence belongs to the LysR transcriptional regulatory family.

It localises to the cytoplasm. Functionally, regulates the expression of the naphthalene (nahA-F) and salicylate (nahG-M) metabolism genes. This chain is HTH-type transcriptional activator NahR (nahR), found in Pseudomonas putida (Arthrobacter siderocapsulatus).